The chain runs to 1010 residues: Regulator of telomere elongation helicase 1 homolog (1010 aa).

Residues 7 to 333 enclose the Helicase ATP-binding domain; sequence NGITVNFPFE…KEMLLQLEKT (327 aa). 42–49 is a binding site for ATP; the sequence is SPTGTGKT. 4 residues coordinate [4Fe-4S] cluster: cysteine 157, cysteine 175, cysteine 184, and cysteine 220. The short motif at 263-266 is the DEAH box element; it reads DEAH. The disordered stretch occupies residues 912–931; the sequence is TSDDEDPGRTGDDPTRQAPE. The span at 918–931 shows a compositional bias: basic and acidic residues; sequence PGRTGDDPTRQAPE.

The protein belongs to the helicase family. RAD3/XPD subfamily.

The protein localises to the nucleus. The enzyme catalyses ATP + H2O = ADP + phosphate + H(+). In terms of biological role, a probable ATP-dependent DNA helicase implicated in DNA repair and the maintenance of genomic stability. Acts as an anti-recombinase to counteract toxic recombination and limit crossover during meiosis. Regulates meiotic recombination and crossover homeostasis by physically dissociating strand invasion events and thereby promotes noncrossover repair by meiotic synthesis dependent strand annealing (SDSA) as well as disassembly of D loop recombination intermediates. The sequence is that of Regulator of telomere elongation helicase 1 homolog from Aedes aegypti (Yellowfever mosquito).